Reading from the N-terminus, the 374-residue chain is F(420)H(2) dehydrogenase subunit D (374 aa).

The protein belongs to the complex I 49 kDa subunit family. As to quaternary structure, the FPO complex is composed of at least 13 different subunits.

It localises to the cell inner membrane. It catalyses the reaction methanophenazine + reduced coenzyme F420-(gamma-L-Glu)(n) = dihydromethanophenazine + oxidized coenzyme F420-(gamma-L-Glu)(n) + H(+). Its function is as follows. Component of the F(420)H(2) dehydrogenase (FPO complex) which is part of the energy-conserving F(420)H(2):heterodisulfide oxidoreductase system. The membrane-bound electron transfer system of the complex plays an important role in the metabolism of methylotrophic methanogens when the organisms grow on methanol or methylamines. Catalyzes the oxidation of methanophenazine to dihydromethanophenazine. It shuttles electrons from F(420)H(2), via FAD and iron-sulfur (Fe-S) centers, to methanophenazine (an electron carrier in the membrane). It couples the redox reaction to proton translocation (for every two electrons transferred, two hydrogen ions are translocated across the cytoplasmic membrane), and thus conserves the redox energy in a proton gradient. It also catalyzes the oxidation of F(420)H(2) with quinones such as 2,3-dimethyl-1,4-naphthoquinone, 2-methyl-1,4-naphthoquinone and tetramethyl-p-benzoquinone. The sequence is that of F(420)H(2) dehydrogenase subunit D (fpoD) from Methanosarcina mazei (strain ATCC BAA-159 / DSM 3647 / Goe1 / Go1 / JCM 11833 / OCM 88) (Methanosarcina frisia).